A 344-amino-acid polypeptide reads, in one-letter code: L-rhamnose-proton symporter (344 aa).

The next 10 membrane-spanning stretches (helical) occupy residues 4-24 (AITMGIFWHLIGAASAACFYA), 38-58 (WSVGGIVSWIILPWAISALLL), 68-88 (FSLSTLLPVFLFGAMWGIGNI), 101-121 (MGIGIAIGITLIVGTLMTPII), 137-157 (TLLGVLVALIGVGIVTRAGQL), 175-195 (LVLAVMCGIFSAGMSFAMNAA), 214-234 (LPSYVVIMGGGAIINLGFCFI), 259-279 (VLLSALGGLMWYLQFFFYAWG), 290-310 (ISWMLHMSFYVLCGGIVGLVL), and 323-343 (VLSLGCVVIIVAANIVGIGMA).

Belongs to the L-rhamnose transporter (TC 2.A.7.6) family.

It is found in the cell inner membrane. It carries out the reaction L-rhamnopyranose(in) + H(+)(in) = L-rhamnopyranose(out) + H(+)(out). In terms of biological role, uptake of L-rhamnose across the cytoplasmic membrane with the concomitant transport of protons into the cell (symport system). This chain is L-rhamnose-proton symporter, found in Escherichia coli O127:H6 (strain E2348/69 / EPEC).